A 232-amino-acid polypeptide reads, in one-letter code: 5'-methylthioadenosine/S-adenosylhomocysteine nucleosidase (232 aa).

The active-site Proton acceptor is Glu12. Substrate-binding positions include Gly78, Ile152, and 173 to 174 (ME). Asp197 functions as the Proton donor in the catalytic mechanism.

Belongs to the PNP/UDP phosphorylase family. MtnN subfamily. As to quaternary structure, homodimer.

It carries out the reaction S-adenosyl-L-homocysteine + H2O = S-(5-deoxy-D-ribos-5-yl)-L-homocysteine + adenine. The catalysed reaction is S-methyl-5'-thioadenosine + H2O = 5-(methylsulfanyl)-D-ribose + adenine. It catalyses the reaction 5'-deoxyadenosine + H2O = 5-deoxy-D-ribose + adenine. It functions in the pathway amino-acid biosynthesis; L-methionine biosynthesis via salvage pathway; S-methyl-5-thio-alpha-D-ribose 1-phosphate from S-methyl-5'-thioadenosine (hydrolase route): step 1/2. Functionally, catalyzes the irreversible cleavage of the glycosidic bond in both 5'-methylthioadenosine (MTA) and S-adenosylhomocysteine (SAH/AdoHcy) to adenine and the corresponding thioribose, 5'-methylthioribose and S-ribosylhomocysteine, respectively. Also cleaves 5'-deoxyadenosine, a toxic by-product of radical S-adenosylmethionine (SAM) enzymes, into 5-deoxyribose and adenine. Thus, is required for in vivo function of the radical SAM enzymes biotin synthase and lipoic acid synthase, that are inhibited by 5'-deoxyadenosine accumulation. The polypeptide is 5'-methylthioadenosine/S-adenosylhomocysteine nucleosidase (Edwardsiella ictaluri (strain 93-146)).